Consider the following 544-residue polypeptide: Chaperonin GroEL (544 aa).

ATP contacts are provided by residues 30-33, lysine 51, 87-91, glycine 415, 480-482, and aspartate 496; these read TLGP, DGTTT, and DAA.

The protein belongs to the chaperonin (HSP60) family. Forms a cylinder of 14 subunits composed of two heptameric rings stacked back-to-back. Interacts with the co-chaperonin GroES.

It localises to the cytoplasm. It catalyses the reaction ATP + H2O + a folded polypeptide = ADP + phosphate + an unfolded polypeptide.. Together with its co-chaperonin GroES, plays an essential role in assisting protein folding. The GroEL-GroES system forms a nano-cage that allows encapsulation of the non-native substrate proteins and provides a physical environment optimized to promote and accelerate protein folding. This Sulfurihydrogenibium sp. (strain YO3AOP1) protein is Chaperonin GroEL.